A 252-amino-acid polypeptide reads, in one-letter code: Vitamin B12 import ATP-binding protein BtuD (252 aa).

The 236-residue stretch at 2–237 folds into the ABC transporter domain; the sequence is IQIKSLSVGA…EQLESVFNTQ (236 aa). 30–37 lines the ATP pocket; the sequence is GPNGSGKS.

It belongs to the ABC transporter superfamily. Vitamin B12 importer (TC 3.A.1.13.1) family. In terms of assembly, the complex is composed of two ATP-binding proteins (BtuD), two transmembrane proteins (BtuC) and a solute-binding protein (BtuF).

It localises to the cell inner membrane. The enzyme catalyses an R-cob(III)alamin(out) + ATP + H2O = an R-cob(III)alamin(in) + ADP + phosphate + H(+). Part of the ABC transporter complex BtuCDF involved in vitamin B12 import. Responsible for energy coupling to the transport system. The sequence is that of Vitamin B12 import ATP-binding protein BtuD from Vibrio atlanticus (strain LGP32) (Vibrio splendidus (strain Mel32)).